The sequence spans 193 residues: MASPQNTSQKRFFQANSPGGMPTASQSQRSRILAQITLRFLAIAFTVTAIPVMITAKEPVSLLGLAITPSYKQSSAMKFLLGVNATVFAFTALSMLFVWPLRRSGSKPINYFFLHLHDMVMTLLLISGCAAATAVGYLSQYGQPETYWSPICDIVKKFCHQMLISTVLSYLAFFCYLALNILSVHKLMSRATE.

Residues 1 to 25 (MASPQNTSQKRFFQANSPGGMPTAS) form a disordered region. Residues 1 to 35 (MASPQNTSQKRFFQANSPGGMPTASQSQRSRILAQ) are Cytoplasmic-facing. A helical membrane pass occupies residues 36-56 (ITLRFLAIAFTVTAIPVMITA). Residues 57–78 (KEPVSLLGLAITPSYKQSSAMK) are Extracellular-facing. Residues 79–99 (FLLGVNATVFAFTALSMLFVW) form a helical membrane-spanning segment. Residues 100-118 (PLRRSGSKPINYFFLHLHD) lie on the Cytoplasmic side of the membrane. Residues 119–139 (MVMTLLLISGCAAATAVGYLS) traverse the membrane as a helical segment. Residues 140–161 (QYGQPETYWSPICDIVKKFCHQ) are Extracellular-facing. Residues 162 to 182 (MLISTVLSYLAFFCYLALNIL) traverse the membrane as a helical segment. The Cytoplasmic segment spans residues 183-193 (SVHKLMSRATE).

This sequence belongs to the Casparian strip membrane proteins (CASP) family. Homodimer and heterodimers.

It is found in the cell membrane. In Populus trichocarpa (Western balsam poplar), this protein is CASP-like protein 1F3.